The following is a 59-amino-acid chain: Large ribosomal subunit protein uL30 (59 aa).

The protein belongs to the universal ribosomal protein uL30 family. As to quaternary structure, part of the 50S ribosomal subunit.

This Citrobacter koseri (strain ATCC BAA-895 / CDC 4225-83 / SGSC4696) protein is Large ribosomal subunit protein uL30.